We begin with the raw amino-acid sequence, 362 residues long: Alkanal monooxygenase alpha chain (362 aa).

It belongs to the bacterial luciferase oxidoreductase family. Heterodimer of an alpha and a beta chain.

It catalyses the reaction a long-chain fatty aldehyde + FMNH2 + O2 = a long-chain fatty acid + hnu + FMN + H2O + 2 H(+). Its function is as follows. Light-emitting reaction in luminous bacteria. The chain is Alkanal monooxygenase alpha chain (luxA) from Photorhabdus luminescens (Xenorhabdus luminescens).